Consider the following 598-residue polypeptide: Aspartate--tRNA(Asp/Asn) ligase (598 aa).

L-aspartate is bound at residue Glu-177. Residues 201 to 204 (QLFK) form an aspartate region. Position 223 (Arg-223) interacts with L-aspartate. ATP-binding positions include 223 to 225 (RDE) and Gln-232. Residue His-456 coordinates L-aspartate. ATP is bound at residue Glu-493. Arg-500 serves as a coordination point for L-aspartate. 545-548 (GLDR) contributes to the ATP binding site.

It belongs to the class-II aminoacyl-tRNA synthetase family. Type 1 subfamily. In terms of assembly, homodimer.

The protein localises to the cytoplasm. The catalysed reaction is tRNA(Asx) + L-aspartate + ATP = L-aspartyl-tRNA(Asx) + AMP + diphosphate. In terms of biological role, aspartyl-tRNA synthetase with relaxed tRNA specificity since it is able to aspartylate not only its cognate tRNA(Asp) but also tRNA(Asn). Reaction proceeds in two steps: L-aspartate is first activated by ATP to form Asp-AMP and then transferred to the acceptor end of tRNA(Asp/Asn). In Prochlorococcus marinus (strain MIT 9215), this protein is Aspartate--tRNA(Asp/Asn) ligase.